Reading from the N-terminus, the 723-residue chain is Transcription factor E2F7 (723 aa).

The segment at 121–146 is disordered; that stretch reads AEEEEEEELDDSCQYEALDESERRPS. The segment covering 122-139 has biased composition (acidic residues); sequence EEEEEEELDDSCQYEALD. DNA-binding regions lie at residues 147–216 and 264–349; these read RKQK…VWHG and RKDK…KWIG. 2 stretches are compositionally biased toward polar residues: residues 356–370 and 395–405; these read SSNS…SNSG and LISSAPSTPHR. 5 disordered regions span residues 356–379, 395–417, 489–546, 650–689, and 702–723; these read SSNS…KMAR, LISS…YSRK, SLRK…ASFG, EHHG…SKSF, and QSAA…TAAN. Residues 494–503 show a composition bias toward basic and acidic residues; it reads ERSEEDDHQT. The span at 520–535 shows a compositional bias: low complexity; the sequence is SESLSSSTRRSPVCSP.

This sequence belongs to the E2F/DP family. As to quaternary structure, homodimer and heterodimer: mainly forms homodimers and, to a lesser extent, heterodimers with e2f8.

It localises to the nucleus. Its function is as follows. Atypical E2F transcription factor that participates in various processes such as angiogenesis and polyploidization of specialized cells. Mainly acts as a transcription repressor that binds DNA independently of DP proteins and specifically recognizes the E2 recognition site 5'-TTTC[CG]CGC-3'. Directly represses transcription of classical E2F transcription factors such as e2f1. Acts as a regulator of S-phase by recognizing and binding the E2-related site 5'-TTCCCGCC-3' and mediating repression of G1/S-regulated genes. Acts as a promoter of sprouting angiogenesis, possibly by acting as a transcription activator and promoting expression of vegfa. The protein is Transcription factor E2F7 (e2f7) of Danio rerio (Zebrafish).